The sequence spans 333 residues: Ribosomal RNA small subunit methyltransferase H (333 aa).

S-adenosyl-L-methionine contacts are provided by residues Gly36–Tyr38, Asp54, Phe81, Asp102, and Gln109.

Belongs to the methyltransferase superfamily. RsmH family.

The protein resides in the cytoplasm. It catalyses the reaction cytidine(1402) in 16S rRNA + S-adenosyl-L-methionine = N(4)-methylcytidine(1402) in 16S rRNA + S-adenosyl-L-homocysteine + H(+). Its function is as follows. Specifically methylates the N4 position of cytidine in position 1402 (C1402) of 16S rRNA. The chain is Ribosomal RNA small subunit methyltransferase H from Afipia carboxidovorans (strain ATCC 49405 / DSM 1227 / KCTC 32145 / OM5) (Oligotropha carboxidovorans).